A 678-amino-acid polypeptide reads, in one-letter code: Probable 3',5'-cyclic phosphodiesterase pde-3 (678 aa).

3 disordered regions span residues 1–27 (MSPG…FQPT), 52–95 (AEMR…VLGG), and 223–250 (TVPA…NEHE). Over residues 7-19 (AVGGVSPPVMVPG) the composition is skewed to low complexity. 2 stretches are compositionally biased toward polar residues: residues 60–85 (TATS…NSGV) and 231–246 (ARSS…PSNN). The PDEase domain maps to 281-632 (RYDTRELDTD…RKWKEQIELE (352 aa)). Histidine 356 serves as the catalytic Proton donor. Residues histidine 360, histidine 421, aspartate 422, and aspartate 531 each contribute to the a divalent metal cation site. Positions 654–678 (EEESASTSDSPDPRRDSPLDSDLSQ) are disordered.

It belongs to the cyclic nucleotide phosphodiesterase family. The cofactor is a divalent metal cation.

The enzyme catalyses a nucleoside 3',5'-cyclic phosphate + H2O = a nucleoside 5'-phosphate + H(+). The protein is Probable 3',5'-cyclic phosphodiesterase pde-3 (pde-3) of Caenorhabditis elegans.